The primary structure comprises 95 residues: Transcription and mRNA export factor ENY2-2 (95 aa).

Belongs to the ENY2 family. As to quaternary structure, component of the nuclear pore complex (NPC)-associated TREX-2 complex (transcription and export complex 2). Component of the SAGA transcription coactivator-HAT complex. Within the SAGA complex, participates in a subcomplex of SAGA called the DUB module (deubiquitination module).

The protein resides in the nucleus. It localises to the nucleoplasm. Involved in mRNA export coupled transcription activation by association with both the TREX-2 and the SAGA complexes. The transcription regulatory histone acetylation (HAT) complex SAGA is a multiprotein complex that activates transcription by remodeling chromatin and mediating histone acetylation and deubiquitination. Within the SAGA complex, participates in a subcomplex that specifically deubiquitinates histones. The SAGA complex is recruited to specific gene promoters by activators, where it is required for transcription. The TREX-2 complex functions in docking export-competent ribonucleoprotein particles (mRNPs) to the nuclear entrance of the nuclear pore complex (nuclear basket). TREX-2 participates in mRNA export and accurate chromatin positioning in the nucleus by tethering genes to the nuclear periphery. The chain is Transcription and mRNA export factor ENY2-2 (eny2-2) from Salmo salar (Atlantic salmon).